The chain runs to 165 residues: Glucosamine 6-phosphate N-acetyltransferase (165 aa).

In terms of domain architecture, N-acetyltransferase spans 22–165; that stretch reads FKVRPLAKDD…DDCNFMTQRF (144 aa). Residues T44, 92–95, and 104–106 contribute to the substrate site; these read KFIH and EDV. 114–119 provides a ligand contact to acetyl-CoA; that stretch reads RQKLGA. Substrate contacts are provided by residues 135-136 and R164; that span reads YK.

It belongs to the acetyltransferase family. GNA1 subfamily.

The catalysed reaction is D-glucosamine 6-phosphate + acetyl-CoA = N-acetyl-D-glucosamine 6-phosphate + CoA + H(+). It functions in the pathway nucleotide-sugar biosynthesis; UDP-N-acetyl-alpha-D-glucosamine biosynthesis; N-acetyl-alpha-D-glucosamine 1-phosphate from alpha-D-glucosamine 6-phosphate (route I): step 1/2. The polypeptide is Glucosamine 6-phosphate N-acetyltransferase (gna-1) (Caenorhabditis elegans).